A 339-amino-acid chain; its full sequence is Photosystem II assembly lipoprotein Ycf48 (339 aa).

Positions Met-1–Gly-22 are cleaved as a signal peptide. Residue Cys-23 is the site of N-palmitoyl cysteine attachment. Residue Cys-23 is the site of S-diacylglycerol cysteine attachment.

Belongs to the Ycf48 family. In terms of assembly, part of early PSII assembly complexes which includes D1 (psbA) and PsbI; not found in mature PSII. Binds to the lumenal side of PSII complexes. Interacts with YidC.

It is found in the cellular thylakoid membrane. A factor required for optimal assembly of photosystem II (PSII), acting in the early stages of PSII assembly. Also plays a role in replacement of photodamaged D1 (psbA). Assists YidC in synthesis of chlorophyll-binding proteins. The chain is Photosystem II assembly lipoprotein Ycf48 from Trichormus variabilis (strain ATCC 29413 / PCC 7937) (Anabaena variabilis).